The chain runs to 223 residues: Uracil-DNA glycosylase (223 aa).

D67 (proton acceptor) is an active-site residue.

This sequence belongs to the uracil-DNA glycosylase (UDG) superfamily. UNG family.

Its subcellular location is the cytoplasm. It carries out the reaction Hydrolyzes single-stranded DNA or mismatched double-stranded DNA and polynucleotides, releasing free uracil.. Functionally, excises uracil residues from the DNA which can arise as a result of misincorporation of dUMP residues by DNA polymerase or due to deamination of cytosine. The chain is Uracil-DNA glycosylase from Borreliella burgdorferi (strain ZS7) (Borrelia burgdorferi).